Reading from the N-terminus, the 541-residue chain is Membrane protein insertase YidC (541 aa).

A run of 6 helical transmembrane segments spans residues 6-26 (NILL…WQAD), 325-345 (LVVD…LLMF), 349-369 (FVGN…GLLF), 420-440 (GGCL…WVLL), 457-477 (LSVQ…MFVM), and 500-520 (VIFT…WLVG).

This sequence belongs to the OXA1/ALB3/YidC family. Type 1 subfamily. Interacts with the Sec translocase complex via SecD. Specifically interacts with transmembrane segments of nascent integral membrane proteins during membrane integration.

Its subcellular location is the cell inner membrane. Functionally, required for the insertion and/or proper folding and/or complex formation of integral membrane proteins into the membrane. Involved in integration of membrane proteins that insert both dependently and independently of the Sec translocase complex, as well as at least some lipoproteins. Aids folding of multispanning membrane proteins. The protein is Membrane protein insertase YidC of Shewanella baltica (strain OS223).